Consider the following 181-residue polypeptide: TATA-box-binding protein (181 aa).

2 tandem repeats follow at residues 7–83 (IVNV…IKEL) and 98–173 (VQNM…LTTL).

This sequence belongs to the TBP family.

General factor that plays a role in the activation of archaeal genes transcribed by RNA polymerase. Binds specifically to the TATA box promoter element which lies close to the position of transcription initiation. This is TATA-box-binding protein from Methanococcus maripaludis (strain C7 / ATCC BAA-1331).